The following is a 70-amino-acid chain: Large ribosomal subunit protein eL38 (70 aa).

Residue Lys4 forms a Glycyl lysine isopeptide (Lys-Gly) (interchain with G-Cter in SUMO2) linkage. Lys9 is modified (N6-acetyllysine; alternate). Residue Lys9 forms a Glycyl lysine isopeptide (Lys-Gly) (interchain with G-Cter in SUMO2); alternate linkage. Position 67 is an N6-acetyllysine (Lys67).

This sequence belongs to the eukaryotic ribosomal protein eL38 family. As to quaternary structure, component of the large ribosomal subunit.

It is found in the cytoplasm. Its function is as follows. Component of the large ribosomal subunit. The ribosome is a large ribonucleoprotein complex responsible for the synthesis of proteins in the cell. This Homo sapiens (Human) protein is Large ribosomal subunit protein eL38 (RPL38).